The following is a 301-amino-acid chain: Mitochondrial import receptor subunit TOM40 homolog (301 aa).

The span at M1–G19 shows a compositional bias: polar residues. Residues M1–S20 form a disordered region.

Belongs to the Tom40 family. In terms of assembly, forms part of the preprotein translocase complex of the outer mitochondrial membrane (TOM complex). Interacts with mitochondrial targeting sequences. Ubiquitously expressed, but highly expressed in the pharyngeal muscles, the nerve ring, the intestine, gonadal sheath and in the tail hypodermis.

It localises to the mitochondrion outer membrane. In terms of biological role, channel-forming protein essential for import of protein precursors into mitochondria. Specifically required for nnt-1 accumulation in the mitochondria and may be involved in the secretion of daf-28/insulin from the mitochondria. Required for embryonic and larval development. This is Mitochondrial import receptor subunit TOM40 homolog from Caenorhabditis elegans.